A 327-amino-acid chain; its full sequence is ATPase GET3 (327 aa).

27–34 (KGGVGKTT) contacts ATP. The active site involves Asp-56. Glu-231 and Asn-258 together coordinate ATP. Zn(2+) contacts are provided by Cys-269 and Cys-272.

The protein belongs to the arsA ATPase family. As to quaternary structure, homodimer. Component of the Golgi to ER traffic (GET) complex, which is composed of GET1, GET2 and GET3. Within the complex, GET1 and GET2 form a heterotetramer which is stabilized by phosphatidylinositol binding and which binds to the GET3 homodimer. Interacts with the chloride channel protein GEF1.

It is found in the cytoplasm. The protein localises to the endoplasmic reticulum. Its subcellular location is the golgi apparatus. ATPase required for the post-translational delivery of tail-anchored (TA) proteins to the endoplasmic reticulum. Recognizes and selectively binds the transmembrane domain of TA proteins in the cytosol. This complex then targets to the endoplasmic reticulum by membrane-bound receptors GET1 and GET2, where the tail-anchored protein is released for insertion. This process is regulated by ATP binding and hydrolysis. ATP binding drives the homodimer towards the closed dimer state, facilitating recognition of newly synthesized TA membrane proteins. ATP hydrolysis is required for insertion. Subsequently, the homodimer reverts towards the open dimer state, lowering its affinity for the GET1-GET2 receptor, and returning it to the cytosol to initiate a new round of targeting. Cooperates with the HDEL receptor ERD2 to mediate the ATP-dependent retrieval of resident ER proteins that contain a C-terminal H-D-E-L retention signal from the Golgi to the ER. Involved in low-level resistance to the oxyanions arsenite and arsenate, and in heat tolerance. The sequence is that of ATPase GET3 from Yarrowia lipolytica (strain CLIB 122 / E 150) (Yeast).